The sequence spans 299 residues: tRNA-cytidine(32) 2-sulfurtransferase (299 aa).

The PP-loop motif motif lies at 56–61; that stretch reads SGGKDS. Positions 131, 134, and 222 each coordinate [4Fe-4S] cluster.

Belongs to the TtcA family. Homodimer. Requires Mg(2+) as cofactor. [4Fe-4S] cluster is required as a cofactor.

The protein localises to the cytoplasm. The enzyme catalyses cytidine(32) in tRNA + S-sulfanyl-L-cysteinyl-[cysteine desulfurase] + AH2 + ATP = 2-thiocytidine(32) in tRNA + L-cysteinyl-[cysteine desulfurase] + A + AMP + diphosphate + H(+). It functions in the pathway tRNA modification. Functionally, catalyzes the ATP-dependent 2-thiolation of cytidine in position 32 of tRNA, to form 2-thiocytidine (s(2)C32). The sulfur atoms are provided by the cysteine/cysteine desulfurase (IscS) system. This chain is tRNA-cytidine(32) 2-sulfurtransferase, found in Xylella fastidiosa (strain M23).